Consider the following 193-residue polypeptide: dCTP deaminase, dUMP-forming (193 aa).

DCTP is bound by residues 101-106 (KSSLGR), D119, 127-129 (TLE), Q148, Y162, and Q174. E129 acts as the Proton donor/acceptor in catalysis. A disordered region spans residues 160-193 (TPYGSGSLGSKYQGQRGPTPSKGYLNFSSEQDSD). Residues 167–177 (LGSKYQGQRGP) show a composition bias toward polar residues.

Belongs to the dCTP deaminase family. Homotrimer.

It catalyses the reaction dCTP + 2 H2O = dUMP + NH4(+) + diphosphate. It functions in the pathway pyrimidine metabolism; dUMP biosynthesis; dUMP from dCTP: step 1/1. Its function is as follows. Bifunctional enzyme that catalyzes both the deamination of dCTP to dUTP and the hydrolysis of dUTP to dUMP without releasing the toxic dUTP intermediate. The polypeptide is dCTP deaminase, dUMP-forming (Corynebacterium efficiens (strain DSM 44549 / YS-314 / AJ 12310 / JCM 11189 / NBRC 100395)).